The following is a 306-amino-acid chain: Recombination-associated protein RdgC (306 aa).

This sequence belongs to the RdgC family.

The protein resides in the cytoplasm. It localises to the nucleoid. In terms of biological role, may be involved in recombination. This chain is Recombination-associated protein RdgC, found in Pseudomonas aeruginosa (strain ATCC 15692 / DSM 22644 / CIP 104116 / JCM 14847 / LMG 12228 / 1C / PRS 101 / PAO1).